We begin with the raw amino-acid sequence, 333 residues long: Holliday junction branch migration complex subunit RuvB (333 aa).

A large ATPase domain (RuvB-L) region spans residues 1–182; the sequence is MEERLVSGEV…FGVISRLEYY (182 aa). ATP is bound by residues Leu21, Arg22, Gly63, Lys66, Thr67, Thr68, 129–131, Arg172, Tyr182, and Arg219; that span reads EDY. Thr67 provides a ligand contact to Mg(2+). Positions 183 to 253 are small ATPAse domain (RuvB-S); the sequence is HVDQLAQIIE…LAVEALERLQ (71 aa). The interval 256 to 333 is head domain (RuvB-H); that stretch reads RLGLDQIDHK…THLGMEVPKR (78 aa). Positions 311 and 316 each coordinate DNA.

Belongs to the RuvB family. As to quaternary structure, homohexamer. Forms an RuvA(8)-RuvB(12)-Holliday junction (HJ) complex. HJ DNA is sandwiched between 2 RuvA tetramers; dsDNA enters through RuvA and exits via RuvB. An RuvB hexamer assembles on each DNA strand where it exits the tetramer. Each RuvB hexamer is contacted by two RuvA subunits (via domain III) on 2 adjacent RuvB subunits; this complex drives branch migration. In the full resolvosome a probable DNA-RuvA(4)-RuvB(12)-RuvC(2) complex forms which resolves the HJ.

It localises to the cytoplasm. The enzyme catalyses ATP + H2O = ADP + phosphate + H(+). Its function is as follows. The RuvA-RuvB-RuvC complex processes Holliday junction (HJ) DNA during genetic recombination and DNA repair, while the RuvA-RuvB complex plays an important role in the rescue of blocked DNA replication forks via replication fork reversal (RFR). RuvA specifically binds to HJ cruciform DNA, conferring on it an open structure. The RuvB hexamer acts as an ATP-dependent pump, pulling dsDNA into and through the RuvAB complex. RuvB forms 2 homohexamers on either side of HJ DNA bound by 1 or 2 RuvA tetramers; 4 subunits per hexamer contact DNA at a time. Coordinated motions by a converter formed by DNA-disengaged RuvB subunits stimulates ATP hydrolysis and nucleotide exchange. Immobilization of the converter enables RuvB to convert the ATP-contained energy into a lever motion, pulling 2 nucleotides of DNA out of the RuvA tetramer per ATP hydrolyzed, thus driving DNA branch migration. The RuvB motors rotate together with the DNA substrate, which together with the progressing nucleotide cycle form the mechanistic basis for DNA recombination by continuous HJ branch migration. Branch migration allows RuvC to scan DNA until it finds its consensus sequence, where it cleaves and resolves cruciform DNA. This is Holliday junction branch migration complex subunit RuvB from Geobacillus kaustophilus (strain HTA426).